The primary structure comprises 225 residues: Phosphatidylserine decarboxylase proenzyme (225 aa).

Residue serine 195 is the Schiff-base intermediate with substrate; via pyruvic acid of the active site. Serine 195 carries the post-translational modification Pyruvic acid (Ser); by autocatalysis.

The protein belongs to the phosphatidylserine decarboxylase family. PSD-A subfamily. In terms of assembly, heterodimer of a large membrane-associated beta subunit and a small pyruvoyl-containing alpha subunit. Pyruvate serves as cofactor. Post-translationally, is synthesized initially as an inactive proenzyme. Formation of the active enzyme involves a self-maturation process in which the active site pyruvoyl group is generated from an internal serine residue via an autocatalytic post-translational modification. Two non-identical subunits are generated from the proenzyme in this reaction, and the pyruvate is formed at the N-terminus of the alpha chain, which is derived from the carboxyl end of the proenzyme. The post-translation cleavage follows an unusual pathway, termed non-hydrolytic serinolysis, in which the side chain hydroxyl group of the serine supplies its oxygen atom to form the C-terminus of the beta chain, while the remainder of the serine residue undergoes an oxidative deamination to produce ammonia and the pyruvoyl prosthetic group on the alpha chain.

It is found in the cell membrane. It catalyses the reaction a 1,2-diacyl-sn-glycero-3-phospho-L-serine + H(+) = a 1,2-diacyl-sn-glycero-3-phosphoethanolamine + CO2. Its pathway is phospholipid metabolism; phosphatidylethanolamine biosynthesis; phosphatidylethanolamine from CDP-diacylglycerol: step 2/2. Functionally, catalyzes the formation of phosphatidylethanolamine (PtdEtn) from phosphatidylserine (PtdSer). The chain is Phosphatidylserine decarboxylase proenzyme from Gluconobacter oxydans (strain 621H) (Gluconobacter suboxydans).